The primary structure comprises 904 residues: Protein translocase subunit SecA (904 aa).

Residues Gln89, 107–111, and Asp502 each bind ATP; that span reads GEGKT. Residues Cys886, Cys888, Cys897, and His898 each coordinate Zn(2+).

It belongs to the SecA family. In terms of assembly, monomer and homodimer. Part of the essential Sec protein translocation apparatus which comprises SecA, SecYEG and auxiliary proteins SecDF-YajC and YidC. It depends on Zn(2+) as a cofactor.

It is found in the cell inner membrane. The protein localises to the cytoplasm. It carries out the reaction ATP + H2O + cellular proteinSide 1 = ADP + phosphate + cellular proteinSide 2.. Its function is as follows. Part of the Sec protein translocase complex. Interacts with the SecYEG preprotein conducting channel. Has a central role in coupling the hydrolysis of ATP to the transfer of proteins into and across the cell membrane, serving both as a receptor for the preprotein-SecB complex and as an ATP-driven molecular motor driving the stepwise translocation of polypeptide chains across the membrane. This is Protein translocase subunit SecA from Rhizobium etli (strain CIAT 652).